A 410-amino-acid chain; its full sequence is Serine/threonine transporter SstT (410 aa).

9 helical membrane-spanning segments follow: residues Val-11–Val-31, Phe-45–Ile-65, Ile-79–Phe-99, Ala-138–Leu-158, Ile-179–Ile-199, Leu-214–Phe-234, Ile-285–Leu-305, Val-327–Ile-347, and Leu-353–Val-373.

This sequence belongs to the dicarboxylate/amino acid:cation symporter (DAACS) (TC 2.A.23) family.

Its subcellular location is the cell membrane. It catalyses the reaction L-serine(in) + Na(+)(in) = L-serine(out) + Na(+)(out). The catalysed reaction is L-threonine(in) + Na(+)(in) = L-threonine(out) + Na(+)(out). In terms of biological role, involved in the import of serine and threonine into the cell, with the concomitant import of sodium (symport system). This Geobacillus thermodenitrificans (strain NG80-2) protein is Serine/threonine transporter SstT.